A 635-amino-acid polypeptide reads, in one-letter code: MERWSINESAKVYNLDNWGADLFSINKKGNICVHPSSNSKNAIDLRALVDDLIKRKIKPPILLRFMDVLQGRIASINRVFRNAIAENDYPAKYQTFYPIKVNQQRQVVEAIASYGKRYNIGLEVGSKPELVAGIAISTGNGLPIICNGYKDAEYIETVLFATRVGYNITIVVEKLFELEKIIELAKKTGIRPSLGIRVKLSSKGTGKWATSGGEDAKFGLRMSEIMAAIKMLQEADLLDCVNLLHSHIGSQVTKIDKIKTALIEAARIYSEMRKLGVNIQYLDIGGGLGVDYDGSKSSYFSSVNYTVEEYANDVIYQIKNICDEAGVDCPNIISESGRATVAHYSVLVTNVLNTNTQNLMPDYEQILEEMEKPAPTVKKLLDIYKSIDRYSLREDYHDTLQLINEAVSLFNLGYLTLQDRAIAEWLYSKIIKKINSIVEKIKPIPEELQNFQLALRQTYFANFSLFQSIPDSWAIDQLFPIMPLQRLGQRPDVMASIADITCDSDGEITSFVGENGRSKFLPMHKLKKDEDYYIGFFLIGAYQEILGDLHNLFGDTNAVHITFNKKTGYMIDTVINGDATWETLKYVQYKGPEILKHVRDNLEKQVAIKKVSIEESSHFIELLDRTLLGYTYLGE.

Lys100 bears the N6-(pyridoxal phosphate)lysine mark. Position 282–292 (282–292 (LDIGGGLGVDY)) interacts with substrate.

It belongs to the Orn/Lys/Arg decarboxylase class-II family. SpeA subfamily. It depends on Mg(2+) as a cofactor. Requires pyridoxal 5'-phosphate as cofactor.

The enzyme catalyses L-arginine + H(+) = agmatine + CO2. The protein operates within amine and polyamine biosynthesis; agmatine biosynthesis; agmatine from L-arginine: step 1/1. In terms of biological role, catalyzes the biosynthesis of agmatine from arginine. The chain is Biosynthetic arginine decarboxylase from Trichlorobacter lovleyi (strain ATCC BAA-1151 / DSM 17278 / SZ) (Geobacter lovleyi).